Here is a 200-residue protein sequence, read N- to C-terminus: Transcription elongation factor A protein-like 3 (200 aa).

Residues 1–200 are disordered; the sequence is MEKPYNKNEG…QRGLHDIPYL (200 aa). A compositionally biased stretch (acidic residues) spans 20–36; it reads DEVEPDDEGKSDEEEKP. S30 bears the Phosphoserine mark. Over residues 37-50 the composition is skewed to basic and acidic residues; the sequence is DVEGKTECEGKRED. Over residues 51–64 the composition is skewed to acidic residues; that stretch reads EGEPGDEGQLEDEG. Position 65 is a phosphoserine (S65). Composition is skewed to basic and acidic residues over residues 65–80, 96–107, and 115–154; these read SQEKQGRSEGEGKPQG, AAEKRPAEDYVP, and DRGTDDSPKDSQEDLQERHLSSEEMMRECGDVSRAQEELR.

The protein belongs to the TFS-II family. TFA subfamily.

It is found in the nucleus. Functionally, may be involved in transcriptional regulation. This is Transcription elongation factor A protein-like 3 (TCEAL3) from Homo sapiens (Human).